Reading from the N-terminus, the 343-residue chain is Ketol-acid reductoisomerase (NADP(+)) (343 aa).

The KARI N-terminal Rossmann domain occupies 7–186 (TTVYYDEDAD…GCTRAGVIET (180 aa)). Residues 30–33 (YGSQ), Arg53, Ser56, Ser58, and 88–91 (DTIQ) contribute to the NADP(+) site. The active site involves His112. Residue Gly138 participates in NADP(+) binding. Residues 187-329 (SFQEEVETDL…ENLRELFAWG (143 aa)) form the KARI C-terminal knotted domain. Asp195, Glu199, Glu231, and Glu235 together coordinate Mg(2+). Ser256 lines the substrate pocket.

Belongs to the ketol-acid reductoisomerase family. Requires Mg(2+) as cofactor.

It catalyses the reaction (2R)-2,3-dihydroxy-3-methylbutanoate + NADP(+) = (2S)-2-acetolactate + NADPH + H(+). It carries out the reaction (2R,3R)-2,3-dihydroxy-3-methylpentanoate + NADP(+) = (S)-2-ethyl-2-hydroxy-3-oxobutanoate + NADPH + H(+). It participates in amino-acid biosynthesis; L-isoleucine biosynthesis; L-isoleucine from 2-oxobutanoate: step 2/4. It functions in the pathway amino-acid biosynthesis; L-valine biosynthesis; L-valine from pyruvate: step 2/4. Functionally, involved in the biosynthesis of branched-chain amino acids (BCAA). Catalyzes an alkyl-migration followed by a ketol-acid reduction of (S)-2-acetolactate (S2AL) to yield (R)-2,3-dihydroxy-isovalerate. In the isomerase reaction, S2AL is rearranged via a Mg-dependent methyl migration to produce 3-hydroxy-3-methyl-2-ketobutyrate (HMKB). In the reductase reaction, this 2-ketoacid undergoes a metal-dependent reduction by NADPH to yield (R)-2,3-dihydroxy-isovalerate. The sequence is that of Ketol-acid reductoisomerase (NADP(+)) from Haloarcula marismortui (strain ATCC 43049 / DSM 3752 / JCM 8966 / VKM B-1809) (Halobacterium marismortui).